A 591-amino-acid polypeptide reads, in one-letter code: MTPTAPSPLVWRDDGLPQSSLYGDVYFSSVDGLAETRAVFLAGCGLPERFAERRDFVVGELGFGSGLNIAALLDLWRREKPPGGRLHIFSIEAHPLSRDEAARILAHWPELGEAAQVLLDHWPGRARGFHRVDLPGFDAVLDLAVMDVVEALEAWDGLADAWFLDGFSPALNPAMWRDEVLAAVGARSAPGARAATFTVAGAVRRGLSAAGFEIAKRPGFGRKRERLEAWRPGVRPVAQRPETLAIIGGGIAGAALARAARAAGLEVTVIDDADAVAASGNPAALVTPALDAGGGPRAALYAQALSRAVTLYEAQPDAVLAREVLQLAAGERDPARFATVADQDLFEPGDMRTLEAEDTRARLETPTPALAMAGARVIAPAEVTAAWAGPVVRRRVAKAERDGEGWRLLDAAGEIIARADRLALAGGAAGADLLAEAPLRPVRGQASWTRGHGAPATAFGGYAIPTREGLLFGATHDRDDTQTNVRSEDHARNLATLAKGLPALAARLAGSTFEGRAAIRATTPDRLPLADLREDGVIVLTGLGSRGFCLAPLLAEHLVARLLDVPSPLPRQLSHLLKLTRFDSPVTRSRL.

The interval 1–232 is tRNA (mnm(5)s(2)U34)-methyltransferase; it reads MTPTAPSPLV…KRERLEAWRP (232 aa). The interval 247 to 591 is FAD-dependent cmnm(5)s(2)U34 oxidoreductase; sequence IGGGIAGAAL…FDSPVTRSRL (345 aa).

This sequence in the N-terminal section; belongs to the methyltransferase superfamily. tRNA (mnm(5)s(2)U34)-methyltransferase family. In the C-terminal section; belongs to the DAO family. FAD serves as cofactor.

It localises to the cytoplasm. It carries out the reaction 5-aminomethyl-2-thiouridine(34) in tRNA + S-adenosyl-L-methionine = 5-methylaminomethyl-2-thiouridine(34) in tRNA + S-adenosyl-L-homocysteine + H(+). Catalyzes the last two steps in the biosynthesis of 5-methylaminomethyl-2-thiouridine (mnm(5)s(2)U) at the wobble position (U34) in tRNA. Catalyzes the FAD-dependent demodification of cmnm(5)s(2)U34 to nm(5)s(2)U34, followed by the transfer of a methyl group from S-adenosyl-L-methionine to nm(5)s(2)U34, to form mnm(5)s(2)U34. This chain is tRNA 5-methylaminomethyl-2-thiouridine biosynthesis bifunctional protein MnmC, found in Caulobacter vibrioides (strain ATCC 19089 / CIP 103742 / CB 15) (Caulobacter crescentus).